The primary structure comprises 368 residues: Chorismate synthase (368 aa).

Arg-46 lines the NADP(+) pocket. FMN is bound by residues 123–125 (RSS), 240–241 (NA), Gly-285, 300–304 (KPTPT), and Arg-326.

Belongs to the chorismate synthase family. Homotetramer. FMNH2 is required as a cofactor.

The enzyme catalyses 5-O-(1-carboxyvinyl)-3-phosphoshikimate = chorismate + phosphate. The protein operates within metabolic intermediate biosynthesis; chorismate biosynthesis; chorismate from D-erythrose 4-phosphate and phosphoenolpyruvate: step 7/7. In terms of biological role, catalyzes the anti-1,4-elimination of the C-3 phosphate and the C-6 proR hydrogen from 5-enolpyruvylshikimate-3-phosphate (EPSP) to yield chorismate, which is the branch point compound that serves as the starting substrate for the three terminal pathways of aromatic amino acid biosynthesis. This reaction introduces a second double bond into the aromatic ring system. The polypeptide is Chorismate synthase (Porphyromonas gingivalis (strain ATCC BAA-308 / W83)).